A 233-amino-acid polypeptide reads, in one-letter code: 7-cyano-7-deazaguanine synthase (233 aa).

ATP is bound at residue 11-21 (LSGGLDSSTVL). Cys195, Cys203, Cys206, and Cys209 together coordinate Zn(2+).

This sequence belongs to the QueC family. It depends on Zn(2+) as a cofactor.

It carries out the reaction 7-carboxy-7-deazaguanine + NH4(+) + ATP = 7-cyano-7-deazaguanine + ADP + phosphate + H2O + H(+). It participates in purine metabolism; 7-cyano-7-deazaguanine biosynthesis. Catalyzes the ATP-dependent conversion of 7-carboxy-7-deazaguanine (CDG) to 7-cyano-7-deazaguanine (preQ(0)). In Thermosynechococcus vestitus (strain NIES-2133 / IAM M-273 / BP-1), this protein is 7-cyano-7-deazaguanine synthase.